The following is a 65-amino-acid chain: Large ribosomal subunit protein bL35 (65 aa).

The segment at Met1–Ala25 is disordered.

This sequence belongs to the bacterial ribosomal protein bL35 family.

The polypeptide is Large ribosomal subunit protein bL35 (Clostridium botulinum (strain Eklund 17B / Type B)).